The chain runs to 58 residues: Large ribosomal subunit protein eL37 (58 aa).

The span at 1 to 17 (MTGAGTPSQGKKNTTTH) shows a compositional bias: polar residues. The segment at 1–26 (MTGAGTPSQGKKNTTTHTKCRRCGEK) is disordered. 4 residues coordinate Zn(2+): cysteine 20, cysteine 23, cysteine 35, and cysteine 38. The segment at 20 to 38 (CRRCGEKSYHTKKKVCSSC) adopts a C4-type zinc-finger fold.

The protein belongs to the eukaryotic ribosomal protein eL37 family. Requires Zn(2+) as cofactor.

Its function is as follows. Binds to the 23S rRNA. In Halobacterium salinarum (strain ATCC 29341 / DSM 671 / R1), this protein is Large ribosomal subunit protein eL37.